We begin with the raw amino-acid sequence, 278 residues long: Lipoyl-[GcvH]:protein N-lipoyltransferase (278 aa).

The BPL/LPL catalytic domain occupies 44-250 (RMAPSTVRGW…SLRHYAGDLV (207 aa)). C149 acts as the Acyl-thioester intermediate in catalysis.

The protein belongs to the octanoyltransferase LipL family.

It catalyses the reaction N(6)-[(R)-lipoyl]-L-lysyl-[glycine-cleavage complex H protein] + L-lysyl-[lipoyl-carrier protein] = L-lysyl-[glycine-cleavage complex H protein] + N(6)-[(R)-lipoyl]-L-lysyl-[lipoyl-carrier protein]. The protein operates within protein modification; protein lipoylation via exogenous pathway. Catalyzes the amidotransfer (transamidation) of the lipoyl moiety from lipoyl-GcvH to the lipoyl domain of the E2 subunit of lipoate-dependent enzymes. Takes part in a pathway for scavenging of lipoic acid derived from eukaryotic host cells. Cannot use lipoyl-tripeptide (DK(L)A), lipoamide (LD), or free lipoate as substrate. In Listeria monocytogenes serovar 1/2a (strain ATCC BAA-679 / EGD-e), this protein is Lipoyl-[GcvH]:protein N-lipoyltransferase.